Consider the following 382-residue polypeptide: Chaperone protein DnaJ 2 (382 aa).

The J domain maps to 4–68 (DYYGLLGVSK…DKRRIVDLGG (65 aa)). Residues 132-214 (GVTKQVTVDT…CMGDGRIRAR (83 aa)) form a CR-type zinc finger. Residues C145, C148, C162, C165, C188, C191, C202, and C205 each contribute to the Zn(2+) site. CXXCXGXG motif repeat units follow at residues 145 to 152 (CDRCQGKG), 162 to 169 (CDTCGGRG), 188 to 195 (CPTCRGVG), and 202 to 209 (CQQCMGDG).

Belongs to the DnaJ family. In terms of assembly, homodimer. Interacts with RNase J. The cofactor is Zn(2+).

It localises to the cytoplasm. Its function is as follows. Participates actively in the response to hyperosmotic and heat shock by preventing the aggregation of stress-denatured proteins and by disaggregating proteins, also in an autonomous, DnaK-independent fashion. Unfolded proteins bind initially to DnaJ; upon interaction with the DnaJ-bound protein, DnaK hydrolyzes its bound ATP, resulting in the formation of a stable complex. GrpE releases ADP from DnaK; ATP binding to DnaK triggers the release of the substrate protein, thus completing the reaction cycle. Several rounds of ATP-dependent interactions between DnaJ, DnaK and GrpE are required for fully efficient folding. Also involved, together with DnaK and GrpE, in the DNA replication of plasmids through activation of initiation proteins. Inhibits the beta-lactamase and RNase activity of RNase J. The chain is Chaperone protein DnaJ 2 from Mycobacterium tuberculosis (strain ATCC 25618 / H37Rv).